A 358-amino-acid chain; its full sequence is U5 small nuclear ribonucleoprotein 40 kDa protein (358 aa).

Lys18 participates in a covalent cross-link: Glycyl lysine isopeptide (Lys-Gly) (interchain with G-Cter in SUMO2). At Arg21 the chain carries Asymmetric dimethylarginine. 7 WD repeats span residues 65 to 104 (GHEGEVYCCKFHPNGSTLASAGFDRLILLWNVYGDCDNYA), 108 to 147 (GHSGAVMELHYNTDGSMLFSASTDKTVAVWDSETGERVKR), 150 to 190 (GHTS…AVQT), 192 to 231 (QNTYQVLAVTFNDTSDQIISGGIDNDIKVWDLRQNKLTYT), 234 to 273 (GHADSVTGLSLSSEGSYLLSNAMDNTVRVWDVRPFAPKER), 284 to 323 (NFEKNLLRCSWSPDGSKIAAGSADRFVYVWDTTSRRVLYK), and 326 to 358 (GHAGSINEVAFHPDEPIILSASSDKRLYMGEIQ). Lys271 is covalently cross-linked (Glycyl lysine isopeptide (Lys-Gly) (interchain with G-Cter in SUMO2)).

As to quaternary structure, component of the pre-catalytic and catalytic spliceosome complexes. Component of the postcatalytic spliceosome P complex. Part of the U5 snRNP complex. Interacts with PRPF8. Component of the U4/U6-U5 tri-snRNP complex composed of the U4, U6 and U5 snRNAs and at least PRPF3, PRPF4, PRPF6, PRPF8, PRPF31, SNRNP200, TXNL4A, WDR57, SNRNP40, DDX23, CD2BP2, PPIH, SNU13, EFTUD2, SART1 and USP39. Component of the minor spliceosome, which splices U12-type introns.

The protein resides in the nucleus. Required for pre-mRNA splicing as component of the activated spliceosome. Component of the U5 small nuclear ribonucleoprotein (snRNP) complex and the U4/U6-U5 tri-snRNP complex, building blocks of the spliceosome. As a component of the minor spliceosome, involved in the splicing of U12-type introns in pre-mRNAs. This Mus musculus (Mouse) protein is U5 small nuclear ribonucleoprotein 40 kDa protein (Snrnp40).